An 847-amino-acid chain; its full sequence is Follistatin-related protein 5 (847 aa).

The N-terminal stretch at 1 to 20 is a signal peptide; it reads MFKCWSVVLVLGFIFLESEG. In terms of domain architecture, Kazal-like spans 83 to 135; sequence GQAECACMDLCKRHYKPVCGSDGEFYENHCEVHRAACLKKQKITIVHNEDCFF. Intrachain disulfides connect Cys89-Cys119, Cys93-Cys112, and Cys101-Cys133. 2 EF-hand domains span residues 175–210 and 211–246; these read RKKL…EELG and KDLF…QVIQ. Asp188, Asp190, Asn192, Glu199, Asp226, Asn228, Asp230, His232, and Glu237 together coordinate Ca(2+). Ig-like domains follow at residues 250–337 and 341–426; these read PEDQ…IFQV and PVIR…EDIS. 2 disulfides stabilise this stretch: Cys270–Cys321 and Cys362–Cys413. Residues Asn318 and Asn394 are each glycosylated (N-linked (GlcNAc...) asparagine).

It is found in the secreted. The chain is Follistatin-related protein 5 (FSTL5) from Homo sapiens (Human).